Reading from the N-terminus, the 344-residue chain is Dihydroorotase (344 aa).

Zn(2+) contacts are provided by H13 and H15. Substrate is bound by residues 15–17 (HFR) and N41. K98, H135, and H173 together coordinate Zn(2+). K98 bears the N6-carboxylysine mark. Residue H135 participates in substrate binding. L218 lines the substrate pocket. Residue D246 coordinates Zn(2+). D246 is a catalytic residue. Residues H250 and A262 each coordinate substrate.

It belongs to the metallo-dependent hydrolases superfamily. DHOase family. Class II DHOase subfamily. As to quaternary structure, homodimer. Requires Zn(2+) as cofactor.

The enzyme catalyses (S)-dihydroorotate + H2O = N-carbamoyl-L-aspartate + H(+). Its pathway is pyrimidine metabolism; UMP biosynthesis via de novo pathway; (S)-dihydroorotate from bicarbonate: step 3/3. Catalyzes the reversible cyclization of carbamoyl aspartate to dihydroorotate. This chain is Dihydroorotase, found in Shewanella woodyi (strain ATCC 51908 / MS32).